A 1332-amino-acid chain; its full sequence is DNA-directed RNA polymerase subunit beta' (1332 aa).

Residues cysteine 60, cysteine 62, cysteine 75, and cysteine 78 each contribute to the Zn(2+) site. The Mg(2+) site is built by aspartate 535, aspartate 537, and aspartate 539. Cysteine 894, cysteine 977, cysteine 984, and cysteine 987 together coordinate Zn(2+).

The protein belongs to the RNA polymerase beta' chain family. As to quaternary structure, the RNAP catalytic core consists of 2 alpha, 1 beta, 1 beta' and 1 omega subunit. When a sigma factor is associated with the core the holoenzyme is formed, which can initiate transcription. Mg(2+) is required as a cofactor. Requires Zn(2+) as cofactor.

The enzyme catalyses RNA(n) + a ribonucleoside 5'-triphosphate = RNA(n+1) + diphosphate. Functionally, DNA-dependent RNA polymerase catalyzes the transcription of DNA into RNA using the four ribonucleoside triphosphates as substrates. In Corynebacterium kroppenstedtii (strain DSM 44385 / JCM 11950 / CIP 105744 / CCUG 35717), this protein is DNA-directed RNA polymerase subunit beta'.